We begin with the raw amino-acid sequence, 146 residues long: HTH-type transcriptional regulator SarZ (146 aa).

The 131-residue stretch at 9–139 (ERQLCFLFYV…LKETLQNFVN (131 aa)) folds into the HTH marR-type domain. The segment at residues 55 to 78 (IKTLGARVFLDSGTLTPLLKKLEK) is a DNA-binding region (H-T-H motif).

Belongs to the SarZ family.

It is found in the cytoplasm. This chain is HTH-type transcriptional regulator SarZ (sarZ), found in Staphylococcus saprophyticus subsp. saprophyticus (strain ATCC 15305 / DSM 20229 / NCIMB 8711 / NCTC 7292 / S-41).